Reading from the N-terminus, the 288-residue chain is MGDNALDLATASSTPIPMPNTGQLVISPQDIGYSDPPKLRGRLKLEFVHDISLDANVEDPIALIPHGIWSIFKSKLAQMRCPKGYITYDKVILSWKPHVATGLARGQIAVVDTRVNHTSIEDLMHKALWKTAPVDLGCTYTIQGTVPYCLPFHPKEGGDVKSDLESQNPIRGIVYITDSRYQEAARHGALTMTLKLSIGTMPTDALTGPRATLSQPHLRDNLRSRSQRISRPPIGITQRPRRSLAEPPLEKEEEQESTLSSEASGSEQGLIIPVQGPSTSSRSRRVRG.

The tract at residues 207–288 (TGPRATLSQP…TSSRSRRVRG (82 aa)) is disordered.

Transports viral genome to neighboring plant cells directly through plasmosdesmata, without any budding. The movement protein allows efficient cell to cell propagation, by bypassing the host cell wall barrier (Potential). This Cucumis melo (Muskmelon) protein is Putative movement protein.